The chain runs to 556 residues: MNSPLPDITATDEWSALKDNAKSIESTTLRDLFANDQDRAKNLSFSVADLHVDLSKNLINDDTLTALIALAKKADLEDHREAMFSGRHINSTEDRAVLHTALRLPAEESLHVDEQNVAADVHDVLARMRDFAHALRSGEWLGVTGHTIKTVVNIGIGGSDLGPAMTTQALRSFATAGISGRFVSNVDPADFTSKVADLDPAETLFVVASKTFTTQETLANAHAARRWFLDSLHLEDGTDEANDAIAKHFVAVSTNAEKVSEFGIDTNNMFGFWDWVGGRYSVDSAIGLSLMAVVGPQNFMSFLEGFHAVDEHFRNTPLEKNVPVLMGLLGVWYDDFLGAQSHAVLPYSQDLARFPAYLQQLTMESNGKSVRIDGTPVTAPTGEIYWGEPGTNGQHAFFQLLHQGTQLVPADFIGFATPNDDLPTADGTGSMHDLLMSNFFAQTKVLAFGKTADEITAEGVDPSIVPHKVMPGNRPTTTILAPALTPSVLGQLIALYEHIVFTEGTIWSINSFDQWGVELGKKQAGELLPAVTGEKGVDTGDASTDSLISWYRENRK.

The active-site Proton donor is E364. Catalysis depends on residues H395 and K521.

This sequence belongs to the GPI family.

The protein localises to the cytoplasm. The enzyme catalyses alpha-D-glucose 6-phosphate = beta-D-fructose 6-phosphate. Its pathway is carbohydrate biosynthesis; gluconeogenesis. It functions in the pathway carbohydrate degradation; glycolysis; D-glyceraldehyde 3-phosphate and glycerone phosphate from D-glucose: step 2/4. Functionally, catalyzes the reversible isomerization of glucose-6-phosphate to fructose-6-phosphate. This is Glucose-6-phosphate isomerase from Corynebacterium kroppenstedtii (strain DSM 44385 / JCM 11950 / CIP 105744 / CCUG 35717).